A 156-amino-acid chain; its full sequence is Ribosomal RNA large subunit methyltransferase H (156 aa).

Residues L73, G104, and 123–128 (LSPLTL) contribute to the S-adenosyl-L-methionine site.

It belongs to the RNA methyltransferase RlmH family. As to quaternary structure, homodimer.

It is found in the cytoplasm. It catalyses the reaction pseudouridine(1915) in 23S rRNA + S-adenosyl-L-methionine = N(3)-methylpseudouridine(1915) in 23S rRNA + S-adenosyl-L-homocysteine + H(+). Specifically methylates the pseudouridine at position 1915 (m3Psi1915) in 23S rRNA. In Yersinia enterocolitica serotype O:8 / biotype 1B (strain NCTC 13174 / 8081), this protein is Ribosomal RNA large subunit methyltransferase H.